The following is a 228-amino-acid chain: Octanoyltransferase (228 aa).

Positions 31-212 constitute a BPL/LPL catalytic domain; the sequence is GETDGILILL…KFSEVFGIHF (182 aa). Residues 76–83, 143–145, and 156–158 contribute to the substrate site; these read RGGKITFH, AIG, and GIA. The active-site Acyl-thioester intermediate is the Cys-174.

The protein belongs to the LipB family.

It is found in the cytoplasm. It catalyses the reaction octanoyl-[ACP] + L-lysyl-[protein] = N(6)-octanoyl-L-lysyl-[protein] + holo-[ACP] + H(+). It functions in the pathway protein modification; protein lipoylation via endogenous pathway; protein N(6)-(lipoyl)lysine from octanoyl-[acyl-carrier-protein]: step 1/2. Functionally, catalyzes the transfer of endogenously produced octanoic acid from octanoyl-acyl-carrier-protein onto the lipoyl domains of lipoate-dependent enzymes. Lipoyl-ACP can also act as a substrate although octanoyl-ACP is likely to be the physiological substrate. This is Octanoyltransferase from Thermoanaerobacter sp. (strain X514).